Reading from the N-terminus, the 193-residue chain is Pyridoxal 5'-phosphate synthase subunit PdxT (193 aa).

50–52 is a binding site for L-glutamine; sequence GES. Cys-82 (nucleophile) is an active-site residue. Residues Arg-109 and 136–137 contribute to the L-glutamine site; that span reads IR. Active-site charge relay system residues include His-172 and Glu-174.

The protein belongs to the glutaminase PdxT/SNO family. As to quaternary structure, in the presence of PdxS, forms a dodecamer of heterodimers. Only shows activity in the heterodimer.

It catalyses the reaction aldehydo-D-ribose 5-phosphate + D-glyceraldehyde 3-phosphate + L-glutamine = pyridoxal 5'-phosphate + L-glutamate + phosphate + 3 H2O + H(+). The enzyme catalyses L-glutamine + H2O = L-glutamate + NH4(+). The protein operates within cofactor biosynthesis; pyridoxal 5'-phosphate biosynthesis. Its function is as follows. Catalyzes the hydrolysis of glutamine to glutamate and ammonia as part of the biosynthesis of pyridoxal 5'-phosphate. The resulting ammonia molecule is channeled to the active site of PdxS. The polypeptide is Pyridoxal 5'-phosphate synthase subunit PdxT (Streptococcus pneumoniae serotype 19F (strain G54)).